We begin with the raw amino-acid sequence, 472 residues long: Pentatricopeptide repeat-containing protein At3g18970 (472 aa).

PPR repeat units follow at residues 107 to 139, 146 to 180, 181 to 216, 219 to 253, 256 to 286, 287 to 321, 322 to 352, and 358 to 388; these read NERTFVFVLGACARSASSSALRVGRIVHGMVKK, SELIGTTLLHFYAKNGDLRYARKVFDEMPERTSVT, WNAMIGGYCSHKDKGNHNARKAMVLFRRFSCCGSGV, TDTTMVCVLSAISQTGLLEIGSLVHGYIEKLGFTP, DVFIGTALVDMYSKCGCLNNAFSVFELMKVK, NVFTWTSMATGLALNGRGNETPNLLNRMAESGIKP, NEITFTSLLSAYRHIGLVEEGIELFKSMKTR, and VIEHYGCIVDLLGKAGRIQEAYQFILAMPIK. Positions 393 to 472 are type E motif; degenerate; the sequence is LLRSLCNACS…IKTRPGYSFV (80 aa).

It belongs to the PPR family. PCMP-E subfamily.

The protein is Pentatricopeptide repeat-containing protein At3g18970 (PCMP-E93) of Arabidopsis thaliana (Mouse-ear cress).